The sequence spans 714 residues: Pre-mRNA-splicing factor CLF1 (714 aa).

HAT repeat units lie at residues 48–80, 83–115, 117–149, 151–182, 184–215, 265–305, 315–347, 349–384, 394–430, 435–470, 472–510, and 555–586; these read SFQL…WEVK, HDFP…FELS, KNIT…TEET, KNYQ…YEKR, DEYD…FEMN, KEYE…FEKS, SIMI…ILQQ, DNNE…IWVK, GSIE…FEIR, NGLA…LEQK, GEWD…FEKN, and MRYA…FESS.

This sequence belongs to the crooked-neck family. In terms of assembly, associated with the spliceosome.

The protein localises to the nucleus. In terms of biological role, involved in pre-mRNA splicing and cell cycle progression. Required for the spliceosome assembly and initiation of the DNA replication. This chain is Pre-mRNA-splicing factor CLF1 (CLF1), found in Debaryomyces hansenii (strain ATCC 36239 / CBS 767 / BCRC 21394 / JCM 1990 / NBRC 0083 / IGC 2968) (Yeast).